The chain runs to 421 residues: Serine--tRNA ligase (421 aa).

230-232 serves as a coordination point for L-serine; that stretch reads TAE. 259 to 261 provides a ligand contact to ATP; that stretch reads RRE. Residue E282 participates in L-serine binding. 346–349 contributes to the ATP binding site; the sequence is EISS. S380 is a binding site for L-serine.

The protein belongs to the class-II aminoacyl-tRNA synthetase family. Type-1 seryl-tRNA synthetase subfamily. In terms of assembly, homodimer. The tRNA molecule binds across the dimer.

The protein resides in the cytoplasm. The catalysed reaction is tRNA(Ser) + L-serine + ATP = L-seryl-tRNA(Ser) + AMP + diphosphate + H(+). The enzyme catalyses tRNA(Sec) + L-serine + ATP = L-seryl-tRNA(Sec) + AMP + diphosphate + H(+). Its pathway is aminoacyl-tRNA biosynthesis; selenocysteinyl-tRNA(Sec) biosynthesis; L-seryl-tRNA(Sec) from L-serine and tRNA(Sec): step 1/1. In terms of biological role, catalyzes the attachment of serine to tRNA(Ser). Is also able to aminoacylate tRNA(Sec) with serine, to form the misacylated tRNA L-seryl-tRNA(Sec), which will be further converted into selenocysteinyl-tRNA(Sec). The polypeptide is Serine--tRNA ligase (Methanosarcina acetivorans (strain ATCC 35395 / DSM 2834 / JCM 12185 / C2A)).